We begin with the raw amino-acid sequence, 370 residues long: Chorismate synthase (370 aa).

An NADP(+)-binding site is contributed by Arg-47. FMN contacts are provided by residues 124-126 (RSS), Gly-286, 301-305 (KPTAT), and Arg-327.

This sequence belongs to the chorismate synthase family. In terms of assembly, homotetramer. Requires FMNH2 as cofactor.

It carries out the reaction 5-O-(1-carboxyvinyl)-3-phosphoshikimate = chorismate + phosphate. Its pathway is metabolic intermediate biosynthesis; chorismate biosynthesis; chorismate from D-erythrose 4-phosphate and phosphoenolpyruvate: step 7/7. Its function is as follows. Catalyzes the anti-1,4-elimination of the C-3 phosphate and the C-6 proR hydrogen from 5-enolpyruvylshikimate-3-phosphate (EPSP) to yield chorismate, which is the branch point compound that serves as the starting substrate for the three terminal pathways of aromatic amino acid biosynthesis. This reaction introduces a second double bond into the aromatic ring system. This chain is Chorismate synthase, found in Trichodesmium erythraeum (strain IMS101).